The following is a 181-amino-acid chain: Adenine phosphoribosyltransferase (181 aa).

This sequence belongs to the purine/pyrimidine phosphoribosyltransferase family. As to quaternary structure, homodimer.

Its subcellular location is the cytoplasm. It carries out the reaction AMP + diphosphate = 5-phospho-alpha-D-ribose 1-diphosphate + adenine. The protein operates within purine metabolism; AMP biosynthesis via salvage pathway; AMP from adenine: step 1/1. Catalyzes a salvage reaction resulting in the formation of AMP, that is energically less costly than de novo synthesis. This is Adenine phosphoribosyltransferase (Aprt) from Drosophila pseudoobscura pseudoobscura (Fruit fly).